The sequence spans 192 residues: Probable nicotinate-nucleotide adenylyltransferase (192 aa).

It belongs to the NadD family.

The enzyme catalyses nicotinate beta-D-ribonucleotide + ATP + H(+) = deamido-NAD(+) + diphosphate. Its pathway is cofactor biosynthesis; NAD(+) biosynthesis; deamido-NAD(+) from nicotinate D-ribonucleotide: step 1/1. Catalyzes the reversible adenylation of nicotinate mononucleotide (NaMN) to nicotinic acid adenine dinucleotide (NaAD). In Rhizobium etli (strain CIAT 652), this protein is Probable nicotinate-nucleotide adenylyltransferase.